Reading from the N-terminus, the 526-residue chain is Cytochrome P450 52A5 (526 aa).

A helical membrane pass occupies residues 18-38 (WYVIVPLAIIIYKVFDYFYVL). Cysteine 473 lines the heme pocket.

It belongs to the cytochrome P450 family. Requires heme as cofactor.

It is found in the membrane. Together with an NADPH cytochrome P450 the enzyme system catalyzes the terminal hydroxylation as the first step in the assimilation of alkanes and fatty acids. In Candida maltosa (Yeast), this protein is Cytochrome P450 52A5 (CYP52A5).